We begin with the raw amino-acid sequence, 197 residues long: dTTP/UTP pyrophosphatase (197 aa).

Aspartate 70 serves as the catalytic Proton acceptor.

Belongs to the Maf family. YhdE subfamily. A divalent metal cation is required as a cofactor.

It is found in the cytoplasm. It catalyses the reaction dTTP + H2O = dTMP + diphosphate + H(+). The catalysed reaction is UTP + H2O = UMP + diphosphate + H(+). Functionally, nucleoside triphosphate pyrophosphatase that hydrolyzes dTTP and UTP. May have a dual role in cell division arrest and in preventing the incorporation of modified nucleotides into cellular nucleic acids. The polypeptide is dTTP/UTP pyrophosphatase (yhdE) (Escherichia coli O157:H7).